Here is a 37-residue protein sequence, read N- to C-terminus: Large ribosomal subunit protein bL36 (37 aa).

It belongs to the bacterial ribosomal protein bL36 family.

The polypeptide is Large ribosomal subunit protein bL36 (Borreliella afzelii (strain PKo) (Borrelia afzelii)).